The following is a 762-amino-acid chain: Mitochondrial intermediate peptidase (762 aa).

Residues 1–28 (MQVRTLLTLGKKKVIGNRQCILSLYRKY) constitute a mitochondrion transit peptide. Residue His-544 coordinates Zn(2+). Glu-545 is an active-site residue. Zn(2+) contacts are provided by His-548 and His-551.

This sequence belongs to the peptidase M3 family. The cofactor is Zn(2+).

Its subcellular location is the mitochondrion matrix. The catalysed reaction is Release of an N-terminal octapeptide as second stage of processing of some proteins imported into the mitochondrion.. Functionally, cleaves proteins, imported into the mitochondrion, to their mature size. While most mitochondrial precursor proteins are processed to the mature form in one step by mitochondrial processing peptidase (MPP), the sequential cleavage by MIP of an octapeptide after initial processing by MPP is a required step for a subgroup of nuclear-encoded precursor proteins destined for the matrix or the inner membrane. This is Mitochondrial intermediate peptidase (oct1) from Schizosaccharomyces pombe (strain 972 / ATCC 24843) (Fission yeast).